We begin with the raw amino-acid sequence, 473 residues long: Probable glycine dehydrogenase (decarboxylating) subunit 2 (473 aa).

The segment at 1 to 40 is disordered; sequence MEHYEQARYAPAEGETNEPLLSENDQTTVSVDPSLPDDLT. The residue at position 270 (K270) is an N6-(pyridoxal phosphate)lysine.

This sequence belongs to the GcvP family. C-terminal subunit subfamily. In terms of assembly, the glycine cleavage system is composed of four proteins: P, T, L and H. In this organism, the P 'protein' is a heterodimer of two subunits. Requires pyridoxal 5'-phosphate as cofactor.

It catalyses the reaction N(6)-[(R)-lipoyl]-L-lysyl-[glycine-cleavage complex H protein] + glycine + H(+) = N(6)-[(R)-S(8)-aminomethyldihydrolipoyl]-L-lysyl-[glycine-cleavage complex H protein] + CO2. Its function is as follows. The glycine cleavage system catalyzes the degradation of glycine. The P protein binds the alpha-amino group of glycine through its pyridoxal phosphate cofactor; CO(2) is released and the remaining methylamine moiety is then transferred to the lipoamide cofactor of the H protein. In Halobacterium salinarum (strain ATCC 700922 / JCM 11081 / NRC-1) (Halobacterium halobium), this protein is Probable glycine dehydrogenase (decarboxylating) subunit 2.